A 406-amino-acid chain; its full sequence is DNA-binding transcriptional repressor Mlc (406 aa).

The segment at residues arginine 33–leucine 42 is a DNA-binding region (H-T-H motif). 4 residues coordinate Zn(2+): histidine 247, cysteine 257, cysteine 259, and cysteine 264.

Belongs to the ROK (NagC/XylR) family. In terms of assembly, homodimer. Homotetramer. There is probably an equilibrium between the dimeric and the tetrameric form. Interacts with dephosphorylated PtsG. Mlc and PtsG EIIB domain form a complex with the 1:1 stoichiometry. Interacts with MtfA.

Its subcellular location is the cytoplasm. With respect to regulation, activity is modulated by glucose. In the presence of glucose, is inhibited by interaction with the dephosphorylated form of PtsG, which sequesters Mlc in the inner membrane and prevents Mlc binding to its target promoters. The restriction of conformational freedom resulting from the anchoring of four ends of Mlc to the membrane could be the primary cause of its loss of DNA-binding activity in vivo. Activity is also inhibited by interaction with the Mlc titration factor A (mtfA). The inactivation mechanisms of Mlc by dephosphorylated PtsG and MtfA differ significantly. Functionally, global regulator of carbohydrate metabolism. Represses the expression of several genes involved in sugar transport and utilization, in particular phosphoenolpyruvate-carbohydrate phosphotransferase system (PTS) genes. Represses expression of ptsG (EIICB(Glc)), which encodes the PTS system glucose-specific EIICB component. Also represses the expression of the manXYZ operon, encoding the mannose-specific PTS system, expression of malT, encoding the transcriptional activator of the maltose regulon, and expression of the pts operon, composed of the genes ptsH, ptsI and crr. Represses its own expression. Acts by binding to the regulatory region of the target genes. The sequence is that of DNA-binding transcriptional repressor Mlc from Escherichia coli (strain K12).